A 445-amino-acid chain; its full sequence is UPF0210 protein STK_02450 (445 aa).

It belongs to the UPF0210 family.

This chain is UPF0210 protein STK_02450, found in Sulfurisphaera tokodaii (strain DSM 16993 / JCM 10545 / NBRC 100140 / 7) (Sulfolobus tokodaii).